The primary structure comprises 197 residues: UPF0314 protein NGR_c32320 (197 aa).

3 helical membrane-spanning segments follow: residues 16 to 36 (WIWL…QHLM), 66 to 86 (WYTP…YLLL), and 152 to 172 (LPVA…GWII).

This sequence belongs to the UPF0314 family.

The protein localises to the cell membrane. This Sinorhizobium fredii (strain NBRC 101917 / NGR234) protein is UPF0314 protein NGR_c32320.